A 263-amino-acid polypeptide reads, in one-letter code: Putative SNAP25 homologous protein SNAP30 (263 aa).

2 disordered regions span residues 1-61 (MFGF…LQSQ) and 132-209 (NLGG…DGLS). 2 stretches are compositionally biased toward polar residues: residues 8–34 (PGNN…TSSE) and 52–61 (FNDSGGLQSQ). The span at 158 to 173 (KPSKKSENHKEEREKL) shows a compositional bias: basic and acidic residues. Over residues 180–194 (RSSSQPALDQPTNAL) the composition is skewed to polar residues. The span at 197-206 (VEQEKAKQDD) shows a compositional bias: basic and acidic residues. Residues 198 to 260 (EQEKAKQDDG…QGANQRARHL (63 aa)) enclose the t-SNARE coiled-coil homology domain.

Belongs to the SNAP-25 family.

It is found in the membrane. The protein resides in the cytoplasm. Functionally, vesicle trafficking protein that functions in the secretory pathway. The polypeptide is Putative SNAP25 homologous protein SNAP30 (SNAP30) (Arabidopsis thaliana (Mouse-ear cress)).